The chain runs to 637 residues: tRNA 5-methylaminomethyl-2-thiouridine biosynthesis bifunctional protein MnmC (637 aa).

The segment at 1-232 (MPERIEWLED…KRDNLQGEFN (232 aa)) is tRNA (mnm(5)s(2)U34)-methyltransferase. The segment at 255–637 (IGAGLAGAAV…YGEAKLVSED (383 aa)) is FAD-dependent cmnm(5)s(2)U34 oxidoreductase.

The protein in the N-terminal section; belongs to the methyltransferase superfamily. tRNA (mnm(5)s(2)U34)-methyltransferase family. This sequence in the C-terminal section; belongs to the DAO family. The cofactor is FAD.

It is found in the cytoplasm. The enzyme catalyses 5-aminomethyl-2-thiouridine(34) in tRNA + S-adenosyl-L-methionine = 5-methylaminomethyl-2-thiouridine(34) in tRNA + S-adenosyl-L-homocysteine + H(+). Catalyzes the last two steps in the biosynthesis of 5-methylaminomethyl-2-thiouridine (mnm(5)s(2)U) at the wobble position (U34) in tRNA. Catalyzes the FAD-dependent demodification of cmnm(5)s(2)U34 to nm(5)s(2)U34, followed by the transfer of a methyl group from S-adenosyl-L-methionine to nm(5)s(2)U34, to form mnm(5)s(2)U34. This is tRNA 5-methylaminomethyl-2-thiouridine biosynthesis bifunctional protein MnmC from Polaromonas sp. (strain JS666 / ATCC BAA-500).